The following is a 559-amino-acid chain: 2-isopropylmalate synthase (559 aa).

Residues 33–307 (PIWCSSDLRD…NPELDFSDID (275 aa)) form the Pyruvate carboxyltransferase domain. Residues aspartate 42, histidine 246, histidine 248, and asparagine 282 each contribute to the Mg(2+) site. The tract at residues 439-559 (ANTPYALVSH…SLSEQQAKAA (121 aa)) is regulatory domain.

The protein belongs to the alpha-IPM synthase/homocitrate synthase family. LeuA type 2 subfamily. In terms of assembly, homodimer. Requires Mg(2+) as cofactor.

Its subcellular location is the cytoplasm. The enzyme catalyses 3-methyl-2-oxobutanoate + acetyl-CoA + H2O = (2S)-2-isopropylmalate + CoA + H(+). It functions in the pathway amino-acid biosynthesis; L-leucine biosynthesis; L-leucine from 3-methyl-2-oxobutanoate: step 1/4. In terms of biological role, catalyzes the condensation of the acetyl group of acetyl-CoA with 3-methyl-2-oxobutanoate (2-ketoisovalerate) to form 3-carboxy-3-hydroxy-4-methylpentanoate (2-isopropylmalate). The sequence is that of 2-isopropylmalate synthase from Pseudomonas fluorescens (strain ATCC BAA-477 / NRRL B-23932 / Pf-5).